Consider the following 210-residue polypeptide: Translation initiation factor IF-3 (210 aa).

The tract at residues 169–210 (APKQAPAPKKERTEESAEKAGSAGETEPVPAASAAAEAPANV) is disordered. Over residues 176 to 186 (PKKERTEESAE) the composition is skewed to basic and acidic residues. Residues 187-210 (KAGSAGETEPVPAASAAAEAPANV) show a composition bias toward low complexity.

This sequence belongs to the IF-3 family. In terms of assembly, monomer.

It is found in the cytoplasm. Its function is as follows. IF-3 binds to the 30S ribosomal subunit and shifts the equilibrium between 70S ribosomes and their 50S and 30S subunits in favor of the free subunits, thus enhancing the availability of 30S subunits on which protein synthesis initiation begins. The sequence is that of Translation initiation factor IF-3 from Deinococcus deserti (strain DSM 17065 / CIP 109153 / LMG 22923 / VCD115).